A 348-amino-acid chain; its full sequence is Holliday junction branch migration complex subunit RuvB (348 aa).

The large ATPase domain (RuvB-L) stretch occupies residues methionine 1–tyrosine 183. ATP-binding positions include leucine 22, arginine 23, glycine 64, lysine 67, threonine 68, threonine 69, glutamate 130–phenylalanine 132, arginine 173, tyrosine 183, and arginine 220. Mg(2+) is bound at residue threonine 68. Positions threonine 184 to glutamate 254 are small ATPAse domain (RuvB-S). The head domain (RuvB-H) stretch occupies residues alanine 257–arginine 348. DNA-binding residues include arginine 293, arginine 312, and arginine 317. The interval leucine 329–arginine 348 is disordered.

It belongs to the RuvB family. As to quaternary structure, homohexamer. Forms an RuvA(8)-RuvB(12)-Holliday junction (HJ) complex. HJ DNA is sandwiched between 2 RuvA tetramers; dsDNA enters through RuvA and exits via RuvB. An RuvB hexamer assembles on each DNA strand where it exits the tetramer. Each RuvB hexamer is contacted by two RuvA subunits (via domain III) on 2 adjacent RuvB subunits; this complex drives branch migration. In the full resolvosome a probable DNA-RuvA(4)-RuvB(12)-RuvC(2) complex forms which resolves the HJ.

It localises to the cytoplasm. It catalyses the reaction ATP + H2O = ADP + phosphate + H(+). Its function is as follows. The RuvA-RuvB-RuvC complex processes Holliday junction (HJ) DNA during genetic recombination and DNA repair, while the RuvA-RuvB complex plays an important role in the rescue of blocked DNA replication forks via replication fork reversal (RFR). RuvA specifically binds to HJ cruciform DNA, conferring on it an open structure. The RuvB hexamer acts as an ATP-dependent pump, pulling dsDNA into and through the RuvAB complex. RuvB forms 2 homohexamers on either side of HJ DNA bound by 1 or 2 RuvA tetramers; 4 subunits per hexamer contact DNA at a time. Coordinated motions by a converter formed by DNA-disengaged RuvB subunits stimulates ATP hydrolysis and nucleotide exchange. Immobilization of the converter enables RuvB to convert the ATP-contained energy into a lever motion, pulling 2 nucleotides of DNA out of the RuvA tetramer per ATP hydrolyzed, thus driving DNA branch migration. The RuvB motors rotate together with the DNA substrate, which together with the progressing nucleotide cycle form the mechanistic basis for DNA recombination by continuous HJ branch migration. Branch migration allows RuvC to scan DNA until it finds its consensus sequence, where it cleaves and resolves cruciform DNA. This chain is Holliday junction branch migration complex subunit RuvB, found in Nitrobacter winogradskyi (strain ATCC 25391 / DSM 10237 / CIP 104748 / NCIMB 11846 / Nb-255).